The following is a 578-amino-acid chain: MIKRYLQFVKPYKYRIFATIIVGIIKFGIPMLIPLLIKYAIDGVINNHALTTDEKVHHLTIAIGIALFIFVIVRPPIEFIRQYLAQWTSNKILYDIRKKLYNHLQALSARFYANNQVGQVISRVINDVEQTKDFILTGLMNIWLDCITIIIALSIMFFLDVKLTLAALFIFPFYILTVYVFFGRLRKLTRERSQALAEVQGFLHERVQGISVVKSFAIEDNEAKNFDKKNTNFLTRALKHTRWNAYSFAAINTVTDIGPIIVIGVGAYLAISGSITVGTLAAFVGYLELLFGPLRRLVASFTTLTQSFASMDRVFQLIDEDYDIKNGVGAQPIEIKQGRIDIDHVSFQYNDNEAPILKDINLSIEKGETVAFVGMSGGGKSTLINLIPRFYDVTSGQILIDGHNIKDFLTGSLRNQIGLVQQDNILFSDTVKENILLGRPTATDEEVVEAAKMANAHDFIMNLPQGYDTEVGERGVKLSGGQKQRLSIARIFLNNPPILILDEATSALDLESESIIQEALDVLSKDRTTLIVAHRLSTITHADKIVVIENGHIVETGTHRELIAKQGAYEHLYSIQNL.

Topologically, residues Met1–Arg15 are cytoplasmic. Residues Ile16–Leu36 traverse the membrane as a helical segment. An ABC transmembrane type-1 domain is found at Ile16–Gln306. Residues Ile37–Leu59 are Extracellular-facing. The chain crosses the membrane as a helical span at residues Thr60–Ile80. The Cytoplasmic portion of the chain corresponds to Arg81–Gly138. A helical transmembrane segment spans residues Leu139–Leu159. Residues Asp160 to Lys162 are Extracellular-facing. Residues Leu163–Gly183 form a helical membrane-spanning segment. Residues Arg184–Asn244 lie on the Cytoplasmic side of the membrane. Residues Ala245–Ile263 traverse the membrane as a helical segment. Residues Gly264 to Leu269 lie on the Extracellular side of the membrane. Residues Ala270–Leu287 form a helical membrane-spanning segment. The Cytoplasmic portion of the chain corresponds to Glu288 to Leu578. Residues Ile340–Ile575 enclose the ABC transporter domain. Gly374–Ser381 provides a ligand contact to ATP.

It belongs to the ABC transporter superfamily. As to quaternary structure, homodimer.

Its subcellular location is the cell membrane. Its function is as follows. May be involved in multidrug export. Transmembrane domains (TMD) form a pore in the cell membrane and the ATP-binding domain (NBD) is responsible for energy generation. This chain is Putative multidrug export ATP-binding/permease protein SA1683, found in Staphylococcus aureus (strain N315).